Consider the following 103-residue polypeptide: MGADDTLRVEPAVMQGFAASLDGAAEHLAVQLAELDAQVGQMLGGWRGASGSAYGSAWELWHRGAGEVQLGLSMLAAAIAHAGAGYQHNETASAQVLREVGGG.

This sequence belongs to the WXG100 family. CFP-10 subfamily.

The protein localises to the secreted. This is ESAT-6-like protein EsxF from Mycobacterium tuberculosis (strain CDC 1551 / Oshkosh).